The sequence spans 162 residues: Transcription elongation factor GreA (162 aa).

A coiled-coil region spans residues 50–75 (YHAAREEQGHLESRIRQLQELLRTAK).

Belongs to the GreA/GreB family.

Functionally, necessary for efficient RNA polymerase transcription elongation past template-encoded arresting sites. The arresting sites in DNA have the property of trapping a certain fraction of elongating RNA polymerases that pass through, resulting in locked ternary complexes. Cleavage of the nascent transcript by cleavage factors such as GreA or GreB allows the resumption of elongation from the new 3'terminus. GreA releases sequences of 2 to 3 nucleotides. In Saccharopolyspora erythraea (strain ATCC 11635 / DSM 40517 / JCM 4748 / NBRC 13426 / NCIMB 8594 / NRRL 2338), this protein is Transcription elongation factor GreA.